Consider the following 603-residue polypeptide: Sulfite reductase [NADPH] flavoprotein alpha-component (603 aa).

Residues 64–202 (ITLISASQTG…QAETWRAAIV (139 aa)) enclose the Flavodoxin-like domain. FMN-binding positions include 70–75 (SQTGNA), 117–120 (STQG), and 153–162 (LGDSSYEHFA). Positions 236-452 (EAPLTAHLAL…IEHNDNFRLP (217 aa)) constitute an FAD-binding FR-type domain. FAD contacts are provided by residues T326, L360, 390–393 (RLYS), 408–410 (TVG), Y414, and 423–426 (GGAS). NADP(+)-binding positions include 523-524 (SR), 529-533 (KIYVQ), and D565. Y603 contributes to the FAD binding site.

Belongs to the NADPH-dependent sulphite reductase flavoprotein subunit CysJ family. It in the N-terminal section; belongs to the flavodoxin family. The protein in the C-terminal section; belongs to the flavoprotein pyridine nucleotide cytochrome reductase family. As to quaternary structure, alpha(8)-beta(8). The alpha component is a flavoprotein, the beta component is a hemoprotein. FAD serves as cofactor. Requires FMN as cofactor.

The catalysed reaction is hydrogen sulfide + 3 NADP(+) + 3 H2O = sulfite + 3 NADPH + 4 H(+). It functions in the pathway sulfur metabolism; hydrogen sulfide biosynthesis; hydrogen sulfide from sulfite (NADPH route): step 1/1. In terms of biological role, component of the sulfite reductase complex that catalyzes the 6-electron reduction of sulfite to sulfide. This is one of several activities required for the biosynthesis of L-cysteine from sulfate. The flavoprotein component catalyzes the electron flow from NADPH -&gt; FAD -&gt; FMN to the hemoprotein component. The chain is Sulfite reductase [NADPH] flavoprotein alpha-component from Sodalis glossinidius (strain morsitans).